Consider the following 901-residue polypeptide: Protein translocase subunit SecA (901 aa).

ATP is bound by residues glutamine 87, 105-109 (GEGKT), and aspartate 512. The segment at 852 to 901 (AQMQQLSHQSDDEAAAEDLAAQTGERKVGRNDPCPCGSGKKYKQCHGRLS) is disordered. Zn(2+) is bound by residues cysteine 885, cysteine 887, cysteine 896, and histidine 897. Residues 891-901 (KKYKQCHGRLS) show a composition bias toward basic residues.

It belongs to the SecA family. As to quaternary structure, monomer and homodimer. Part of the essential Sec protein translocation apparatus which comprises SecA, SecYEG and auxiliary proteins SecDF-YajC and YidC. Zn(2+) is required as a cofactor.

Its subcellular location is the cell inner membrane. It localises to the cytoplasm. The enzyme catalyses ATP + H2O + cellular proteinSide 1 = ADP + phosphate + cellular proteinSide 2.. Part of the Sec protein translocase complex. Interacts with the SecYEG preprotein conducting channel. Has a central role in coupling the hydrolysis of ATP to the transfer of proteins into and across the cell membrane, serving both as a receptor for the preprotein-SecB complex and as an ATP-driven molecular motor driving the stepwise translocation of polypeptide chains across the membrane. This chain is Protein translocase subunit SecA, found in Klebsiella pneumoniae (strain 342).